Here is a 396-residue protein sequence, read N- to C-terminus: Protein BOP3 (396 aa).

6 disordered regions span residues Met-1–Asn-22, Gly-98–Pro-126, Pro-145–His-168, Val-203–Asn-239, Arg-254–Leu-274, and Arg-355–Thr-396. Composition is skewed to polar residues over residues Gln-111 to Asn-124, Ala-159 to His-168, and Gly-210 to Leu-230. Residues Arg-355 to Cys-369 show a composition bias toward basic and acidic residues. The span at Ser-370–Thr-396 shows a compositional bias: polar residues.

It is found in the cytoplasm. The protein localises to the nucleus. Its function is as follows. Involved in resistance to methylmercury. Overexpression suppresses a PAM1-SLV3 double null mutation. The polypeptide is Protein BOP3 (BOP3) (Saccharomyces cerevisiae (strain ATCC 204508 / S288c) (Baker's yeast)).